Consider the following 427-residue polypeptide: BRO1 domain-containing protein BROX homolog (427 aa).

The BRO1 domain maps to 1–427 (MSHWFHRNPI…PSNSSGCVIA (427 aa)).

It belongs to the BROX family.

In Caenorhabditis elegans, this protein is BRO1 domain-containing protein BROX homolog.